Here is a 515-residue protein sequence, read N- to C-terminus: Glucose-6-phosphate 1-dehydrogenase (515 aa).

The residue at position 2 (Ala-2) is an N-acetylalanine. Ser-8 is modified (phosphoserine). Phosphothreonine is present on Thr-10. Residues 38-45 (GASGDLAK) and Arg-72 each bind NADP(+). Lys-89 bears the N6-acetyllysine mark. NADP(+) contacts are provided by Tyr-147 and Lys-171. Residues Lys-171, 201-205 (HYLGK), Glu-239, and Asp-258 each bind D-glucose 6-phosphate. Residue Lys-171 is modified to N6-(2-hydroxyisobutyryl)lysine; alternate. Position 171 is an N6-acetyllysine; alternate (Lys-171). His-263 serves as the catalytic Proton acceptor. Arg-357 is a binding site for NADP(+). D-glucose 6-phosphate contacts are provided by Lys-360 and Arg-365. Lys-366, Arg-370, and Arg-393 together coordinate NADP(+). Residue Gln-395 coordinates D-glucose 6-phosphate. Residues 401 to 403 (YTK) and 421 to 423 (DLT) contribute to the NADP(+) site. Lys-403 carries the N6-acetyllysine modification. At Lys-432 the chain carries N6-acetyllysine. Arg-487 lines the NADP(+) pocket. Position 497 is an N6-acetyllysine (Lys-497). Residues Tyr-503 and Trp-509 each contribute to the NADP(+) site. Tyr-503 carries the post-translational modification Phosphotyrosine.

It belongs to the glucose-6-phosphate dehydrogenase family. Homotetramer; dimer of dimers. Interacts with SIRT2; the interaction is enhanced by H(2)O(2) treatment. Forms a ternary complex with ALDOB and TP53; this interaction is direct. ALDOB stabilizes the complex inhibiting G6PD activity and keeping oxidative pentose phosphate metabolism in check. Acetylated by ELP3 at Lys-403; acetylation inhibits its homodimerization and enzyme activity. Deacetylated by SIRT2 at Lys-403; deacetylation stimulates its enzyme activity.

It localises to the cytoplasm. The protein localises to the cytosol. It is found in the membrane. It catalyses the reaction D-glucose 6-phosphate + NADP(+) = 6-phospho-D-glucono-1,5-lactone + NADPH + H(+). It functions in the pathway carbohydrate degradation; pentose phosphate pathway; D-ribulose 5-phosphate from D-glucose 6-phosphate (oxidative stage): step 1/3. Its function is as follows. Cytosolic glucose-6-phosphate dehydrogenase that catalyzes the first and rate-limiting step of the oxidative branch within the pentose phosphate pathway/shunt, an alternative route to glycolysis for the dissimilation of carbohydrates and a major source of reducing power and metabolic intermediates for fatty acid and nucleic acid biosynthetic processes. The chain is Glucose-6-phosphate 1-dehydrogenase (G6pdx) from Rattus norvegicus (Rat).